The chain runs to 454 residues: tRNA modification GTPase MnmE (454 aa).

Residues R23, E80, and K120 each coordinate (6S)-5-formyl-5,6,7,8-tetrahydrofolate. The 162-residue stretch at 216-377 folds into the TrmE-type G domain; it reads GMKVVIAGRP…LRNHLKQSMG (162 aa). N226 contributes to the K(+) binding site. Residues 226-231, 245-251, 270-273, 335-338, and 358-360 contribute to the GTP site; these read NAGKSS, TDIAGTT, DTAG, NKAD, and SAR. Residue S230 coordinates Mg(2+). K(+) contacts are provided by T245, I247, and T250. Residue T251 coordinates Mg(2+). K454 lines the (6S)-5-formyl-5,6,7,8-tetrahydrofolate pocket.

This sequence belongs to the TRAFAC class TrmE-Era-EngA-EngB-Septin-like GTPase superfamily. TrmE GTPase family. Homodimer. Heterotetramer of two MnmE and two MnmG subunits. Requires K(+) as cofactor.

The protein resides in the cytoplasm. Functionally, exhibits a very high intrinsic GTPase hydrolysis rate. Involved in the addition of a carboxymethylaminomethyl (cmnm) group at the wobble position (U34) of certain tRNAs, forming tRNA-cmnm(5)s(2)U34. The polypeptide is tRNA modification GTPase MnmE (Escherichia coli O17:K52:H18 (strain UMN026 / ExPEC)).